The chain runs to 306 residues: Recombination-associated protein RdgC (306 aa).

This sequence belongs to the RdgC family.

It is found in the cytoplasm. Its subcellular location is the nucleoid. May be involved in recombination. The protein is Recombination-associated protein RdgC of Pseudomonas putida (strain GB-1).